Reading from the N-terminus, the 906-residue chain is Protein translocase subunit SecA (906 aa).

Residues Gln89, 107–111, and Asp502 each bind ATP; that span reads GEGKT. Residues Cys890, Cys892, Cys901, and His902 each contribute to the Zn(2+) site.

Belongs to the SecA family. Monomer and homodimer. Part of the essential Sec protein translocation apparatus which comprises SecA, SecYEG and auxiliary proteins SecDF-YajC and YidC. Requires Zn(2+) as cofactor.

The protein localises to the cell inner membrane. Its subcellular location is the cytoplasm. The enzyme catalyses ATP + H2O + cellular proteinSide 1 = ADP + phosphate + cellular proteinSide 2.. Part of the Sec protein translocase complex. Interacts with the SecYEG preprotein conducting channel. Has a central role in coupling the hydrolysis of ATP to the transfer of proteins into and across the cell membrane, serving both as a receptor for the preprotein-SecB complex and as an ATP-driven molecular motor driving the stepwise translocation of polypeptide chains across the membrane. The polypeptide is Protein translocase subunit SecA (Brucella canis (strain ATCC 23365 / NCTC 10854 / RM-666)).